A 930-amino-acid polypeptide reads, in one-letter code: Endoplasmic reticulum aminopeptidase 1 (930 aa).

The Cytoplasmic portion of the chain corresponds to Met-1–Pro-2. A helical; Signal-anchor for type II membrane protein membrane pass occupies residues Ser-3–Ser-23. The Lumenal portion of the chain corresponds to Asp-24–Leu-930. 2 N-linked (GlcNAc...) asparagine glycosylation sites follow: Asn-59 and Asn-143. Substrate contacts are provided by residues Glu-172 and Gly-306–Asn-310. His-342 serves as a coordination point for Zn(2+). The active-site Proton acceptor is Glu-343. The Zn(2+) site is built by His-346 and Glu-365. A disulfide bond links Cys-393 and Cys-432. Asn-403 and Asn-655 each carry an N-linked (GlcNAc...) asparagine glycan. A disulfide bridge links Cys-725 with Cys-732. N-linked (GlcNAc...) asparagine glycans are attached at residues Asn-749 and Asn-890.

It belongs to the peptidase M1 family. As to quaternary structure, monomer. May also exist as a heterodimer; with ERAP2. Interacts with RBMX. It depends on Zn(2+) as a cofactor. Post-translationally, N-glycosylated. In terms of tissue distribution, ubiquitous.

It localises to the endoplasmic reticulum membrane. Its function is as follows. Aminopeptidase that plays a central role in peptide trimming, a step required for the generation of most HLA class I-binding peptides. Peptide trimming is essential to customize longer precursor peptides to fit them to the correct length required for presentation on MHC class I molecules. Strongly prefers substrates 9-16 residues long. Rapidly degrades 13-mer to a 9-mer and then stops. Preferentially hydrolyzes the residue Leu and peptides with a hydrophobic C-terminus, while it has weak activity toward peptides with charged C-terminus. May play a role in the inactivation of peptide hormones. May be involved in the regulation of blood pressure through the inactivation of angiotensin II and/or the generation of bradykinin in the kidney. The protein is Endoplasmic reticulum aminopeptidase 1 (Erap1) of Rattus norvegicus (Rat).